Consider the following 500-residue polypeptide: MSKAAGGSAPAAESCPSAPAGASTPTGVDDLSKVTDEELLQWSKEELIRSLRRAEAEKVSAMLDHSNLIREVNRRLQLHLGEIRGLKDINQKLQEDNQELRDLCCFLDDDRQKGKRVSREWQRLGRYTAGVMHKEVALYLQKLKELEVKQEEVVKENMELKELCMLLDEEKGVGCAGSRCSIDSQASLCQLVASATPYVRDVGDGSSTSSTGSTDSPDHHKHHASGGSPEHLQKPRSEGSPEHTKHRSTSPEHLHKPRASGTPDHSKALKGPSPEHHKPLCKGSPEQQRHPHPGSSPEVLPKHVLSGSPEHFQKHRPGGSPEHTRHSGGSPEHLQKHALGGSLEHLPRARGTSPEHLKQHYGASPDHKHASGSGGSGGGSREGTLRRPAQEDSSSHHRNVYSGMNESTLSYVRQLEARVRQLEEENRMLPQGSFRLSSGADGNNSSLNSPASFSGHTTPSQQPEPVVHSLKVVWRKLGDAAGSCPGIRQHLSGNQYKGPM.

A compositionally biased stretch (low complexity) spans 1–23 (MSKAAGGSAPAAESCPSAPAGAS). Residues 1 to 30 (MSKAAGGSAPAAESCPSAPAGASTPTGVDD) form a disordered region. Coiled-coil stretches lie at residues 38–104 (ELLQ…RDLC) and 132–171 (MHKE…DEEK). Disordered stretches follow at residues 200-405 (RDVG…SGMN) and 426-465 (NRML…QPEP). The segment covering 204–215 (DGSSTSSTGSTD) has biased composition (low complexity). Residues 231-254 (HLQKPRSEGSPEHTKHRSTSPEHL) are compositionally biased toward basic and acidic residues. A compositionally biased stretch (gly residues) spans 372–381 (GSGGSGGGSR). Residues 383–395 (GTLRRPAQEDSSS) show a composition bias toward basic and acidic residues. Residues 404 to 429 (MNESTLSYVRQLEARVRQLEEENRML) adopt a coiled-coil conformation. The span at 434–463 (FRLSSGADGNNSSLNSPASFSGHTTPSQQP) shows a compositional bias: polar residues. At Arg488 the chain carries Asymmetric dimethylarginine.

This sequence belongs to the CCDC85 family. May interact with ARVCF; CTNND1; CTNND2 and PKP4.

It is found in the cell junction. It localises to the adherens junction. Functionally, may play a role in cell-cell adhesion and epithelium development through its interaction with proteins of the beta-catenin family. This chain is Coiled-coil domain-containing protein 85A (Ccdc85a), found in Mus musculus (Mouse).